The following is a 396-amino-acid chain: 1-deoxy-D-xylulose 5-phosphate reductoisomerase (396 aa).

6 residues coordinate NADPH: threonine 15, glycine 16, serine 17, isoleucine 18, glycine 41, and asparagine 130. Residue lysine 131 coordinates 1-deoxy-D-xylulose 5-phosphate. Glutamate 132 contacts NADPH. Aspartate 155 contacts Mn(2+). Positions 156, 157, 181, and 204 each coordinate 1-deoxy-D-xylulose 5-phosphate. Glutamate 157 provides a ligand contact to Mn(2+). Glycine 210 is a binding site for NADPH. Serine 217, asparagine 222, lysine 223, and glutamate 226 together coordinate 1-deoxy-D-xylulose 5-phosphate. Glutamate 226 lines the Mn(2+) pocket.

This sequence belongs to the DXR family. Requires Mg(2+) as cofactor. The cofactor is Mn(2+).

It catalyses the reaction 2-C-methyl-D-erythritol 4-phosphate + NADP(+) = 1-deoxy-D-xylulose 5-phosphate + NADPH + H(+). It participates in isoprenoid biosynthesis; isopentenyl diphosphate biosynthesis via DXP pathway; isopentenyl diphosphate from 1-deoxy-D-xylulose 5-phosphate: step 1/6. In terms of biological role, catalyzes the NADPH-dependent rearrangement and reduction of 1-deoxy-D-xylulose-5-phosphate (DXP) to 2-C-methyl-D-erythritol 4-phosphate (MEP). The polypeptide is 1-deoxy-D-xylulose 5-phosphate reductoisomerase (Bifidobacterium longum subsp. infantis (strain ATCC 15697 / DSM 20088 / JCM 1222 / NCTC 11817 / S12)).